A 254-amino-acid chain; its full sequence is Pectate lyase E (254 aa).

An N-terminal signal peptide occupies residues 1-17; it reads MYQPLLLLPLLLTSAFA. The disordered stretch occupies residues 227–254; that stretch reads TNNNSKEPKKKSSGPSSYCKYSEPLSKC. Residue Asn229 is glycosylated (N-linked (GlcNAc...) asparagine). Low complexity predominate over residues 239 to 254; the sequence is SGPSSYCKYSEPLSKC.

It belongs to the polysaccharide lyase 3 family. Ca(2+) is required as a cofactor.

Its subcellular location is the secreted. It catalyses the reaction Eliminative cleavage of (1-&gt;4)-alpha-D-galacturonan to give oligosaccharides with 4-deoxy-alpha-D-galact-4-enuronosyl groups at their non-reducing ends.. Its function is as follows. Pectinolytic enzyme consist of four classes of enzymes: pectin lyase, polygalacturonase, pectin methylesterase and rhamnogalacturonase. Among pectinolytic enzymes, pectin lyase is the most important in depolymerization of pectin, since it cleaves internal glycosidic bonds of highly methylated pectins. Favors pectate, the anion, over pectin, the methyl ester. This is Pectate lyase E (plyE) from Emericella nidulans (strain FGSC A4 / ATCC 38163 / CBS 112.46 / NRRL 194 / M139) (Aspergillus nidulans).